The following is a 473-amino-acid chain: H(+)/Cl(-) exchange transporter ClcA (473 aa).

At 1 to 32 the chain is on the cytoplasmic side; that stretch reads MKTDNSTFLAQQIVRLRRRDQIRRLMQRDKTP. The helical transmembrane segment at 33–69 threads the bilayer; it reads LAILFMAAVVGTLTGLVGVAFEKAVSWVQNMRIGALV. Topologically, residues 70-76 are periplasmic; the sequence is QVADHAF. Residues 77 to 100 form a helical membrane-spanning segment; that stretch reads LLWPLAFILSALLAMVGYFLVRKF. The Selectivity filter part_1 motif lies at 106-110; that stretch reads GSGIP. S107 serves as a coordination point for chloride. An intramembrane region (helical) is located at residues 109 to 116; that stretch reads IPEIEGAL. Topologically, residues 117 to 123 are cytoplasmic; the sequence is EELRPVR. 2 helical membrane-spanning segments follow: residues 124–141 and 148–166; these read WWRV…TLGA and EGPT…LDVF. The short motif at 146–150 is the Selectivity filter part_2 element; that stretch reads GREGP. The Cytoplasmic segment spans residues 167-176; the sequence is RMRSAEARHT. Intramembrane regions (helical) lie at residues 177 to 189 and 193 to 201; these read LLAT…LSAA and PLAGILFII. Over 202–214 the chain is Cytoplasmic; that stretch reads EEMRPQFRYNLIS. The chain crosses the membrane as a helical span at residues 215 to 232; sequence IKAVFTGVIMSSIVFRIF. Topologically, residues 233–252 are periplasmic; it reads NGEAPIIEVGKLSDAPVNTL. The chain crosses the membrane as a helical span at residues 253–281; sequence WLYLILGIIFGCVGPVFNSLVLRTQDMFQ. At 282 to 287 the chain is on the cytoplasmic side; it reads RFHGGE. A helical membrane pass occupies residues 288–309; the sequence is IKKWVLMGGAIGGLCGILGLIE. Over 310 to 329 the chain is Periplasmic; that stretch reads PEAAGGGFNLIPIAAAGNFS. The next 2 membrane-spanning stretches (helical) occupy residues 330-349 and 355-376; these read VGLL…LCFS and GIFA…MAAA. The Selectivity filter part_3 motif lies at 355-359; sequence GIFAP. Residues I356 and F357 each coordinate chloride. Over 377–386 the chain is Periplasmic; that stretch reads VLFPQYHLEA. The segment at residues 387–401 is an intramembrane region (helical); it reads GTFAIAGMGALMAAS. Positions 402–404 form an intramembrane region, note=Loop between two helices; the sequence is VRA. Positions 405-416 form an intramembrane region, helical; it reads PLTGIVLVLEMT. Residues 417–421 constitute an intramembrane region (note=Loop between two helices); the sequence is DNYQL. A helical transmembrane segment spans residues 422 to 438; it reads ILPMIITCLGATLLAQF. At 439–473 the chain is on the cytoplasmic side; it reads LGGKPLYSTILARTLAKQDAEQAAKNQNAPAGENT. Y445 serves as a coordination point for chloride.

Belongs to the chloride channel (TC 2.A.49) family. ClcA subfamily. As to quaternary structure, homodimer.

The protein resides in the cell inner membrane. It catalyses the reaction 2 chloride(in) + H(+)(out) = 2 chloride(out) + H(+)(in). Proton-coupled chloride transporter. Functions as antiport system and exchanges two chloride ions for 1 proton. Probably acts as an electrical shunt for an outwardly-directed proton pump that is linked to amino acid decarboxylation, as part of the extreme acid resistance (XAR) response. This Salmonella schwarzengrund (strain CVM19633) protein is H(+)/Cl(-) exchange transporter ClcA.